Reading from the N-terminus, the 283-residue chain is Pre-protein-C8 (283 aa).

Positions 1–40 (MKEDNNTSEESGRINRRNVLKTVGAAGLFAAGSTGMAAAA) form a signal peptide, tat-type signal. The helix-loop-helix (HLH) region stretch occupies residues 61-75 (ARELAKTPAFRELAQ).

In terms of assembly, immunity protein HalI interacts with Halocin-C8; the interaction is direct. In terms of processing, predicted to be exported by the Tat system. The position of the signal peptide cleavage has not been experimentally proven.

The protein resides in the secreted. Its subcellular location is the cell membrane. Functionally, has antibacterial activity against a wide variety of haloarchaeons. Causes cell lysis and death, possibly by disrupting the cell wall. Its function is as follows. Acts as an immunity protein for halocin-C8. Able to block the halocin-C8 activity by sequestering the activity of halocin-C8 through specific and direct binding. This chain is Pre-protein-C8 (proC8), found in Halobacterium sp. (strain AS7092).